The sequence spans 435 residues: Galactomannan galactosyltransferase 1 (435 aa).

Residues 1–20 (MAKFGSRNKSPKWISNGCCF) are Cytoplasmic-facing. Residues 21 to 41 (LLGAFTALLLLWGLCSFIIPI) form a helical; Signal-anchor for type II membrane protein membrane-spanning segment. Topologically, residues 42-435 (PNTDPKLNSV…SPLPFGYPAA (394 aa)) are lumenal. N-linked (GlcNAc...) asparagine glycans are attached at residues Asn-230 and Asn-328. Residues 321–354 (EIVKTYENISERYDEVERKVEGLRRRHAEKVSEK) adopt a coiled-coil conformation.

Belongs to the glycosyltransferase 34 family.

Its subcellular location is the golgi apparatus membrane. In terms of biological role, galactomannan galactosyltransferase (GMGT) involved in galactomannan biosynthesis in seed endosperm. GMGT specificity is an important factor regulating the distribution and amount of alpha-1,6-galactose (Gal) substitution of the beta-1,4-linked mannan backbone. This Cyamopsis tetragonoloba (Guar) protein is Galactomannan galactosyltransferase 1 (GMGT1).